Consider the following 421-residue polypeptide: Stemmadenine O-acetyltransferase (421 aa).

Positions 1-21 (MAPQMQILSEELIQPSSPTPQ) are disordered. Residues H160 and D362 each act as proton acceptor in the active site.

The protein belongs to the plant acyltransferase family. As to quaternary structure, monomer. In terms of tissue distribution, expressed in leaf epidermis.

It carries out the reaction 15alpha-stemmadenine + acetyl-CoA = O-acetyl-15alpha-stemmadenine + CoA. It participates in alkaloid biosynthesis. In terms of biological role, component of iboga and aspidosperma monoterpenoid indole alkaloids (MIAs, e.g. tabersonine and catharanthine) biosynthesis pathway from 19E-geissoschizine. Acetyltransferase that catalyzes the formation of O-acetylstemmadenine from stemmadenine. The chain is Stemmadenine O-acetyltransferase from Catharanthus roseus (Madagascar periwinkle).